Consider the following 435-residue polypeptide: tRNA-2-methylthio-N(6)-dimethylallyladenosine synthase (435 aa).

Residues lysine 5–alanine 120 form the MTTase N-terminal domain. [4Fe-4S] cluster is bound by residues cysteine 14, cysteine 51, cysteine 83, cysteine 152, cysteine 156, and cysteine 159. Positions arginine 138–lysine 372 constitute a Radical SAM core domain. The TRAM domain maps to lysine 374–glycine 435.

The protein belongs to the methylthiotransferase family. MiaB subfamily. In terms of assembly, monomer. Requires [4Fe-4S] cluster as cofactor.

The protein resides in the cytoplasm. The enzyme catalyses N(6)-dimethylallyladenosine(37) in tRNA + (sulfur carrier)-SH + AH2 + 2 S-adenosyl-L-methionine = 2-methylsulfanyl-N(6)-dimethylallyladenosine(37) in tRNA + (sulfur carrier)-H + 5'-deoxyadenosine + L-methionine + A + S-adenosyl-L-homocysteine + 2 H(+). Functionally, catalyzes the methylthiolation of N6-(dimethylallyl)adenosine (i(6)A), leading to the formation of 2-methylthio-N6-(dimethylallyl)adenosine (ms(2)i(6)A) at position 37 in tRNAs that read codons beginning with uridine. The polypeptide is tRNA-2-methylthio-N(6)-dimethylallyladenosine synthase (Sulfurimonas denitrificans (strain ATCC 33889 / DSM 1251) (Thiomicrospira denitrificans (strain ATCC 33889 / DSM 1251))).